The chain runs to 284 residues: Bifunctional protein FolD (284 aa).

Residues 166-168 and I232 each bind NADP(+); that span reads GAS.

Belongs to the tetrahydrofolate dehydrogenase/cyclohydrolase family. In terms of assembly, homodimer.

The enzyme catalyses (6R)-5,10-methylene-5,6,7,8-tetrahydrofolate + NADP(+) = (6R)-5,10-methenyltetrahydrofolate + NADPH. It catalyses the reaction (6R)-5,10-methenyltetrahydrofolate + H2O = (6R)-10-formyltetrahydrofolate + H(+). It functions in the pathway one-carbon metabolism; tetrahydrofolate interconversion. In terms of biological role, catalyzes the oxidation of 5,10-methylenetetrahydrofolate to 5,10-methenyltetrahydrofolate and then the hydrolysis of 5,10-methenyltetrahydrofolate to 10-formyltetrahydrofolate. The polypeptide is Bifunctional protein FolD (Shewanella baltica (strain OS195)).